Here is a 347-residue protein sequence, read N- to C-terminus: NADH-ubiquinone oxidoreductase chain 2 (347 aa).

10 helical membrane passes run 1-21 (MNPLVFTVIMSTVMLGTAIVA), 25-45 (HWLMAWIGFEMNMLAVIPILM), 59-79 (YFLTQATASMLLMLAVTMNLV), 111-131 (FHFWVPEVAQGISLPSGLILL), 149-169 (INLDLLMTLSILSIGIGGWGG), 178-198 (IMAYSSIAHMGWMTTILAYNP), 201-221 (TLLNLAIYILLTTTTFMMFML), 237-257 (MPLLTTAILLTMLSLGGLPPL), 276-296 (VILPTMMAVMALLNLYFYMRL), and 326-346 (LSPLIILSTLILPLSPMLALL).

It belongs to the complex I subunit 2 family. Core subunit of respiratory chain NADH dehydrogenase (Complex I) which is composed of 45 different subunits. Interacts with TMEM242.

The protein localises to the mitochondrion inner membrane. The enzyme catalyses a ubiquinone + NADH + 5 H(+)(in) = a ubiquinol + NAD(+) + 4 H(+)(out). Functionally, core subunit of the mitochondrial membrane respiratory chain NADH dehydrogenase (Complex I) which catalyzes electron transfer from NADH through the respiratory chain, using ubiquinone as an electron acceptor. Essential for the catalytic activity and assembly of complex I. This Pteropus pumilus (Little golden-mantled flying fox) protein is NADH-ubiquinone oxidoreductase chain 2.